The sequence spans 140 residues: Translation initiation factor 2 subunit beta (140 aa).

This sequence belongs to the eIF-2-beta/eIF-5 family. Heterotrimer composed of an alpha, a beta and a gamma chain.

Its function is as follows. eIF-2 functions in the early steps of protein synthesis by forming a ternary complex with GTP and initiator tRNA. The polypeptide is Translation initiation factor 2 subunit beta (Pyrococcus furiosus (strain ATCC 43587 / DSM 3638 / JCM 8422 / Vc1)).